Reading from the N-terminus, the 423-residue chain is MLDIKLIREQPDEVKRRLARCGVDGAVVDQVLAFDEQRRRLIYEVETRKAERNTVSKQIGAMKDPAERQAKIDAMRQLGDEIAALDRQLAEVEEQQRAVMLEIRNLPHPDVPDGVDDRDNVVIYQEGEERQLPFPARPHWELGEALGIIDFERGVKLAGSRFYVMRGAGARLQRAVIQWLIDLHLEQGYQEVYTPFVVKESVLWASGQLPKFRDNLYRDEESGLWLVPTAEVPLTSLYADEILDASQLPIYHVAYTPCFRKEQLSAGRDVRGIKRGHQFDKVEMYMFVTPDQSYQALEKLRRDAEECARRLGLPFRTKLLCTGDLGFGSTKTYDIEVWAPGVGEWLEVSSCSNVEAFQARRANLRYRPEPGAKPEFLHTLNGSGLGLPRTIIAIMENYQQEDGSILIPEVLRPYMGGMERIGP.

Position 229 to 231 (Thr-229 to Glu-231) interacts with L-serine. Arg-260–Glu-262 lines the ATP pocket. Glu-283 contacts L-serine. Glu-347 to Ser-350 contacts ATP. Residue Ser-383 coordinates L-serine.

It belongs to the class-II aminoacyl-tRNA synthetase family. Type-1 seryl-tRNA synthetase subfamily. As to quaternary structure, homodimer. The tRNA molecule binds across the dimer.

It localises to the cytoplasm. The enzyme catalyses tRNA(Ser) + L-serine + ATP = L-seryl-tRNA(Ser) + AMP + diphosphate + H(+). It catalyses the reaction tRNA(Sec) + L-serine + ATP = L-seryl-tRNA(Sec) + AMP + diphosphate + H(+). It functions in the pathway aminoacyl-tRNA biosynthesis; selenocysteinyl-tRNA(Sec) biosynthesis; L-seryl-tRNA(Sec) from L-serine and tRNA(Sec): step 1/1. Its function is as follows. Catalyzes the attachment of serine to tRNA(Ser). Is also able to aminoacylate tRNA(Sec) with serine, to form the misacylated tRNA L-seryl-tRNA(Sec), which will be further converted into selenocysteinyl-tRNA(Sec). The sequence is that of Serine--tRNA ligase from Chloroflexus aurantiacus (strain ATCC 29366 / DSM 635 / J-10-fl).